We begin with the raw amino-acid sequence, 391 residues long: Chorismate synthase (391 aa).

Arginine 48 is a binding site for NADP(+). FMN contacts are provided by residues 126-128 (RAS), glycine 286, 301-305 (KPTSS), and arginine 328.

This sequence belongs to the chorismate synthase family. FMNH2 is required as a cofactor.

The enzyme catalyses 5-O-(1-carboxyvinyl)-3-phosphoshikimate = chorismate + phosphate. It functions in the pathway metabolic intermediate biosynthesis; chorismate biosynthesis; chorismate from D-erythrose 4-phosphate and phosphoenolpyruvate: step 7/7. In terms of biological role, catalyzes the anti-1,4-elimination of the C-3 phosphate and the C-6 proR hydrogen from 5-enolpyruvylshikimate-3-phosphate (EPSP) to yield chorismate, which is the branch point compound that serves as the starting substrate for the three terminal pathways of aromatic amino acid biosynthesis. This reaction introduces a second double bond into the aromatic ring system. The polypeptide is Chorismate synthase (Saccharolobus solfataricus (strain ATCC 35092 / DSM 1617 / JCM 11322 / P2) (Sulfolobus solfataricus)).